The sequence spans 208 residues: MNRKQIAKGKLVRRFGINIFEQPKYDKILKKKPHPPGMHGKARKAKITEYGKQLIEKQKIKFTYGVSERQLTNTFKEAKKHHGVTGDNLLSILERRIDNIVYRAGFAISRAHARQIVSHGIIILNGRRVTIPSIILRANDQIQIKEKDSLKKLIRSNIEKTSSLRNLPTWIEVNADDLNIKVKHAPSRDEIPTLANEQMVVEYYSKRA.

One can recognise an S4 RNA-binding domain in the interval 95–157 (RRIDNIVYRA…DSLKKLIRSN (63 aa)).

Belongs to the universal ribosomal protein uS4 family. As to quaternary structure, part of the 30S ribosomal subunit. Contacts protein S5. The interaction surface between S4 and S5 is involved in control of translational fidelity.

In terms of biological role, one of the primary rRNA binding proteins, it binds directly to 16S rRNA where it nucleates assembly of the body of the 30S subunit. Functionally, with S5 and S12 plays an important role in translational accuracy. This is Small ribosomal subunit protein uS4 from Borrelia garinii subsp. bavariensis (strain ATCC BAA-2496 / DSM 23469 / PBi) (Borreliella bavariensis).